The following is a 177-amino-acid chain: Transmembrane protein 275 (177 aa).

Positions 1–20 are disordered; the sequence is MPQAKKSTETLAPAPPGRSR. 2 helical membrane passes run 36–56 and 63–83; these read GLCV…AAFL and LVVG…CCVC. Residues 113 to 177 are disordered; it reads ESSERTAQDT…LNFPRDPAAS (65 aa). Positions 128 to 161 are enriched in low complexity; that stretch reads SPAASAASSGRSSPGPGLFALDPPAPATAAPYLP.

The protein resides in the membrane. The sequence is that of Transmembrane protein 275 from Mus musculus (Mouse).